Here is a 662-residue protein sequence, read N- to C-terminus: Sodium/glucose cotransporter 1 (662 aa).

Residues 1–24 lie on the Extracellular side of the membrane; sequence MDSSTLSPLTTSTAAPLESYERIR. Residues 25–47 traverse the membrane as a helical segment; it reads NAADISVIVIYFLVVMAVGLWAM. The Cytoplasmic segment spans residues 48-66; the sequence is FSTNRGTVGGFFLAGRSMV. Residues 67 to 90 traverse the membrane as a helical segment; the sequence is WWPIGASLFASNIGSGHFVGLAGT. The Extracellular portion of the chain corresponds to 91–95; that stretch reads GAASG. The helical transmembrane segment at 96–117 threads the bilayer; that stretch reads IATGGFEWNALIMVVVLGWVFV. The Cytoplasmic portion of the chain corresponds to 118-139; it reads PIYIRAGVVTMPEYLQKRFGGK. Residues 140 to 169 form a helical membrane-spanning segment; the sequence is RIQIYLSILSLLLYIFTKISADIFSGAIFI. Residues 170-176 lie on the Extracellular side of the membrane; that stretch reads QLTLGLD. The helical transmembrane segment at 177–193 threads the bilayer; that stretch reads IYVAIIILLVITGLYTI. Over 194–202 the chain is Cytoplasmic; it reads TGGLAAVIY. A helical transmembrane segment spans residues 203 to 221; that stretch reads TDTLQTAIMMVGSVILTGF. Residues 222–275 lie on the Extracellular side of the membrane; sequence AFHEVGGYEAFTEKYMRAIPSQISYGNTSIPQKCYTPREDAFHIFRDAITGDIP. N-linked (GlcNAc...) asparagine glycosylation occurs at N248. Disulfide bonds link C255/C511, C255/C608, C345/C351, C355/C361, and C517/C522. The chain crosses the membrane as a helical span at residues 276–295; that stretch reads WPGLVFGMSILTLWYWCTDQ. The Cytoplasmic segment spans residues 296-309; it reads VIVQRCLSAKNLSH. A helical membrane pass occupies residues 310–331; that stretch reads VKAGCILCGYLKVMPMFLIVMM. Residues 332 to 375 lie on the Extracellular side of the membrane; the sequence is GMVSRILYTDKVACVVPSECERYCGTRVGCTNIAFPTLVVELMP. A helical membrane pass occupies residues 376 to 406; sequence NGLRGLMLSVMMASLMSSLTSIFNSASTLFT. Topologically, residues 407-422 are cytoplasmic; sequence MDIYTKIRKKASEKEL. A helical transmembrane segment spans residues 423–444; that stretch reads MIAGRLFMLFLIGISIAWVPIV. Over 445–451 the chain is Extracellular; that stretch reads QSAQSGQ. A helical transmembrane segment spans residues 452–477; it reads LFDYIQSITSYLGPPIAAVFLLAIFW. A D-glucose-binding site is contributed by Q457. The Cytoplasmic segment spans residues 478 to 481; it reads KRVN. Residues 482–504 form a helical membrane-spanning segment; it reads EPGAFWGLVLGFLIGISRMITEF. Topologically, residues 505–525 are extracellular; sequence AYGTGSCMEPSNCPTIICGVH. A helical transmembrane segment spans residues 526–547; it reads YLYFAIILFVISIITVVVVSLF. Residues 548-642 are Cytoplasmic-facing; that stretch reads TKPIPDVHLY…TSEHPLWRTV (95 aa). The helical transmembrane segment at 643 to 660 threads the bilayer; that stretch reads VNINGVILLAVAVFCYAY. The Extracellular portion of the chain corresponds to 661 to 662; it reads FA.

Belongs to the sodium:solute symporter (SSF) (TC 2.A.21) family. N-glycosylation is not necessary for the cotransporter function. Found predominantly in intestine, renal cortex and in outer renal medulla.

It is found in the apical cell membrane. The enzyme catalyses D-glucose(out) + 2 Na(+)(out) = D-glucose(in) + 2 Na(+)(in). The catalysed reaction is D-galactose(out) + 2 Na(+)(out) = D-galactose(in) + 2 Na(+)(in). Its activity is regulated as follows. Enhanced by the interaction with PDZK1IP1/MAP17; but unlike SLC5A2/SGLT2, PDZK1IP1 is not essential for SLC5A1 transporter activity. Possibly modulated by cholesterol binding. Its function is as follows. Electrogenic Na(+)-coupled sugar symporter that actively transports D-glucose or D-galactose at the plasma membrane, with a Na(+) to sugar coupling ratio of 2:1. Transporter activity is driven by a transmembrane Na(+) electrochemical gradient set by the Na(+)/K(+) pump. Has a primary role in the transport of dietary monosaccharides from enterocytes to blood. Responsible for the absorption of D-glucose or D-galactose across the apical brush-border membrane of enterocytes, whereas basolateral exit is provided by GLUT2. Additionally, functions as a D-glucose sensor in enteroendocrine cells, triggering the secretion of the incretins GCG and GIP that control food intake and energy homeostasis. Together with SGLT2, functions in reabsorption of D-glucose from glomerular filtrate, playing a nonredundant role in the S3 segment of the proximal tubules. Transports D-glucose into endometrial epithelial cells, controlling glycogen synthesis and nutritional support for the embryo as well as the decidual transformation of endometrium prior to conception. Acts as a water channel enabling passive water transport in response to the osmotic gradient created upon sugar and Na(+) uptake. Has high water conductivity comparable to aquaporins and therefore is expected to play an important role in transepithelial water permeability, especially in the small intestine. In Oryctolagus cuniculus (Rabbit), this protein is Sodium/glucose cotransporter 1 (SLC5A1).